The sequence spans 467 residues: MAP kinase-interacting serine/threonine-protein kinase 2 (467 aa).

A Protein kinase domain is found at 83–367; that stretch reads QLQQEILGEG…AAQVLQHPWV (285 aa). Residues 89-97 and K112 each bind ATP; that span reads LGEGAYAKV. The Proton acceptor role is filled by D204. Positions 298, 310, and 313 each coordinate Zn(2+). Residues 432-467 are disordered; that stretch reads MQLSPPSESKLAKRRQQGSKGGISPPSLAPLLIVSD.

It belongs to the protein kinase superfamily. CAMK Ser/Thr protein kinase family. Requires Mg(2+) as cofactor. Zn(2+) is required as a cofactor.

The enzyme catalyses L-seryl-[protein] + ATP = O-phospho-L-seryl-[protein] + ADP + H(+). It catalyses the reaction L-threonyl-[protein] + ATP = O-phospho-L-threonyl-[protein] + ADP + H(+). In terms of biological role, may play a role in the response to environmental stress and cytokines. Appears to regulate translation by phosphorylating EIF4E, thus increasing the affinity of this protein for the 7-methylguanosine-containing mRNA cap. This chain is MAP kinase-interacting serine/threonine-protein kinase 2 (mknk2), found in Xenopus laevis (African clawed frog).